The chain runs to 626 residues: ATP-dependent zinc metalloprotease FtsH (626 aa).

The Cytoplasmic portion of the chain corresponds to 1–5; the sequence is MNFRN. The helical transmembrane segment at 6-26 threads the bilayer; it reads LAIWLVIVAVLGGVFVVSQNS. The Periplasmic segment spans residues 27-98; that stretch reads RTKSSSEISY…DVKFKSGSIS (72 aa). A helical membrane pass occupies residues 99-119; it reads FLAILVQLLPILLVVGVWLFL. The Cytoplasmic segment spans residues 120-626; sequence MRQMQGGAKG…SPGAGASVTA (507 aa). 191–198 is an ATP binding site; it reads GPPGTGKT. Histidine 413 contributes to the Zn(2+) binding site. Residue glutamate 414 is part of the active site. Zn(2+) is bound by residues histidine 417 and aspartate 491.

It in the central section; belongs to the AAA ATPase family. This sequence in the C-terminal section; belongs to the peptidase M41 family. In terms of assembly, homohexamer. Requires Zn(2+) as cofactor.

The protein resides in the cell inner membrane. In terms of biological role, acts as a processive, ATP-dependent zinc metallopeptidase for both cytoplasmic and membrane proteins. Plays a role in the quality control of integral membrane proteins. Its function is as follows. Absence of FtsH leads to increased sigma-32 levels, which suggests, in analogy to E.coli, that sigma-32 is a substrate for FtsH. May play a role in the general stress response, as overexpression leads to improved resistance to salt stress. The sequence is that of ATP-dependent zinc metalloprotease FtsH from Caulobacter vibrioides (strain NA1000 / CB15N) (Caulobacter crescentus).